We begin with the raw amino-acid sequence, 253 residues long: Triosephosphate isomerase, cytosolic (253 aa).

Asn10 and Lys12 together coordinate substrate. Residue His96 is the Electrophile of the active site. Residue Glu166 is the Proton acceptor of the active site.

Belongs to the triosephosphate isomerase family. As to quaternary structure, homodimer.

Its subcellular location is the cytoplasm. The catalysed reaction is D-glyceraldehyde 3-phosphate = dihydroxyacetone phosphate. It participates in carbohydrate biosynthesis; gluconeogenesis. It functions in the pathway carbohydrate degradation; glycolysis; D-glyceraldehyde 3-phosphate from glycerone phosphate: step 1/1. The sequence is that of Triosephosphate isomerase, cytosolic from Secale cereale (Rye).